A 221-amino-acid polypeptide reads, in one-letter code: Phosphatidylethanolamine-binding protein homolog F40A3.3 (221 aa).

The protein belongs to the phosphatidylethanolamine-binding protein family.

This is Phosphatidylethanolamine-binding protein homolog F40A3.3 from Caenorhabditis elegans.